Reading from the N-terminus, the 932-residue chain is Protocadherin gamma-A6 (932 aa).

Residues 1–29 (MAPPQRHPQRSEQVLLLTLLGTLWGAAAA) form the signal peptide. Cadherin domains lie at 30–133 (QIRY…TPRF), 134–242 (LKEE…TPMF), 243–347 (TQPV…VPEV), 348–452 (VVTS…PPTF), 453–562 (PHSS…APEI), and 570–682 (DGST…EPSA). The Extracellular portion of the chain corresponds to 30–692 (QIRYSIPEEL…KPNDSDLTLY (663 aa)). N-linked (GlcNAc...) asparagine glycosylation occurs at Asn81. Asn419 and Asn545 each carry an N-linked (GlcNAc...) asparagine glycan. An N-linked (GlcNAc...) asparagine glycan is attached at Asn685. Residues 693-713 (LVVAVAAVSCVFLAFVIVLLA) form a helical membrane-spanning segment. The Cytoplasmic portion of the chain corresponds to 714–932 (LRLQRWHKSR…KKKSGKKEKK (219 aa)). 2 disordered regions span residues 804–841 (PRQLQQAPPNTDWRFSQAQRPGTSGSQNGDDTGTWPNN) and 902–932 (ATLTNAAGKRDGKAPAGGNGNKKKSGKKEKK). The span at 806-841 (QLQQAPPNTDWRFSQAQRPGTSGSQNGDDTGTWPNN) shows a compositional bias: polar residues. Over residues 922-932 (NKKKSGKKEKK) the composition is skewed to basic residues.

The protein resides in the cell membrane. Potential calcium-dependent cell-adhesion protein. May be involved in the establishment and maintenance of specific neuronal connections in the brain. The chain is Protocadherin gamma-A6 (PCDHGA6) from Homo sapiens (Human).